Here is a 21-residue protein sequence, read N- to C-terminus: Alpha-fibrinogenase A1 (21 aa).

This sequence belongs to the peptidase S1 family. Snake venom subfamily. In terms of assembly, monomer. Expressed by the venom gland.

Its subcellular location is the secreted. With respect to regulation, inhibited by PMSF, bovine aprotinin (APR), and soybean trypsin inhibitor (STI). Is not inhibited by EDTA, beta-mercaptoethanol, and high temperature (85 degrees Celsius). In terms of biological role, snake venom serine protease that completely cleaves fibrinogen Aalpha chain (FGA), partially cleaves Bbeta chain (FGB) and has no activity on gamma chain. Is more potent that A2 and A3 alpha-fibrinogenases. Very active within 5 minutes. This is Alpha-fibrinogenase A1 from Crotalus atrox (Western diamondback rattlesnake).